We begin with the raw amino-acid sequence, 330 residues long: Probable WRKY transcription factor 39 (330 aa).

A DNA-binding region (WRKY) is located at residues 256 to 322; the sequence is KIADIPPDEY…YEGEHNHSRI (67 aa).

It localises to the nucleus. Transcription factor. Interacts specifically with the W box (5'-(T)TGAC[CT]-3'), a frequently occurring elicitor-responsive cis-acting element. The polypeptide is Probable WRKY transcription factor 39 (WRKY39) (Arabidopsis thaliana (Mouse-ear cress)).